The following is a 145-amino-acid chain: MKNKFLIIDTSILPDVFDKVVKVKELLRTGHVKDISEGVKQVGISRSTYYKYRDSVFTLSESVAGHKITLGLTLAHKAGTLSKILDNIAQKKGNILTINQDIPINNAANVSITFDASQLEVEVNELMEDIRTLKSVIKVNLAAVE.

The 76-residue stretch at 69 to 144 (TLGLTLAHKA…SVIKVNLAAV (76 aa)) folds into the ACT domain.

This sequence belongs to the UPF0735 family.

The protein is UPF0735 ACT domain-containing protein CKL_0858 of Clostridium kluyveri (strain ATCC 8527 / DSM 555 / NBRC 12016 / NCIMB 10680 / K1).